The following is a 101-amino-acid chain: MIKSELVQRIAEHNPHLYQRDVENIVNAILDEIVAALARGDRVELRGFGAFSVKHRPARAGRNPRTGAHVPVDQKSVPFFKTGKEMRERLNRDTGAPDSGA.

The disordered stretch occupies residues 58 to 101 (ARAGRNPRTGAHVPVDQKSVPFFKTGKEMRERLNRDTGAPDSGA). Residues 82–92 (TGKEMRERLNR) are compositionally biased toward basic and acidic residues.

The protein belongs to the bacterial histone-like protein family. In terms of assembly, heterodimer of an alpha and a beta chain.

Its function is as follows. This protein is one of the two subunits of integration host factor, a specific DNA-binding protein that functions in genetic recombination as well as in transcriptional and translational control. In Rhodopseudomonas palustris (strain BisB18), this protein is Integration host factor subunit beta.